We begin with the raw amino-acid sequence, 221 residues long: Large ribosomal subunit protein uL3 (221 aa).

The segment at 140-160 (GGPKTHGSGFHRHAGSIGMRS) is disordered.

This sequence belongs to the universal ribosomal protein uL3 family. As to quaternary structure, part of the 50S ribosomal subunit. Forms a cluster with proteins L14 and L19.

One of the primary rRNA binding proteins, it binds directly near the 3'-end of the 23S rRNA, where it nucleates assembly of the 50S subunit. This Chlamydia caviae (strain ATCC VR-813 / DSM 19441 / 03DC25 / GPIC) (Chlamydophila caviae) protein is Large ribosomal subunit protein uL3.